We begin with the raw amino-acid sequence, 347 residues long: GTP 3',8-cyclase (347 aa).

Residues 10-242 form the Radical SAM core domain; the sequence is RLNRPIGVLR…ERINARWPLE (233 aa). Position 19 (R19) interacts with GTP. [4Fe-4S] cluster-binding residues include C26 and C30. Y32 is a binding site for S-adenosyl-L-methionine. C33 lines the [4Fe-4S] cluster pocket. R65 contributes to the GTP binding site. G69 provides a ligand contact to S-adenosyl-L-methionine. Position 104 (T104) interacts with GTP. S129 is an S-adenosyl-L-methionine binding site. K178 provides a ligand contact to GTP. M212 contacts S-adenosyl-L-methionine. [4Fe-4S] cluster is bound by residues C275 and C278. Residue 280-282 coordinates GTP; that stretch reads RLR. Position 292 (C292) interacts with [4Fe-4S] cluster.

Belongs to the radical SAM superfamily. MoaA family. Monomer and homodimer. Requires [4Fe-4S] cluster as cofactor.

The enzyme catalyses GTP + AH2 + S-adenosyl-L-methionine = (8S)-3',8-cyclo-7,8-dihydroguanosine 5'-triphosphate + 5'-deoxyadenosine + L-methionine + A + H(+). It participates in cofactor biosynthesis; molybdopterin biosynthesis. Functionally, catalyzes the cyclization of GTP to (8S)-3',8-cyclo-7,8-dihydroguanosine 5'-triphosphate. This is GTP 3',8-cyclase from Synechococcus sp. (strain CC9605).